The chain runs to 190 residues: Elongation factor P-like protein (190 aa).

Belongs to the elongation factor P family.

In Pectobacterium carotovorum subsp. carotovorum (strain PC1), this protein is Elongation factor P-like protein.